An 89-amino-acid chain; its full sequence is Large ribosomal subunit protein bL27 (89 aa).

Residues 1–22 are disordered; sequence MAQKKAGGSSRNGRDSAGRRLG.

Belongs to the bacterial ribosomal protein bL27 family.

This Gluconacetobacter diazotrophicus (strain ATCC 49037 / DSM 5601 / CCUG 37298 / CIP 103539 / LMG 7603 / PAl5) protein is Large ribosomal subunit protein bL27.